Consider the following 199-residue polypeptide: Photosystem I reaction center subunit XI (199 aa).

Transmembrane regions (helical) follow at residues 108-128 (LTAG…LLVL) and 165-185 (FWLG…TLHL).

The protein belongs to the PsaL family.

The protein resides in the cellular thylakoid membrane. The polypeptide is Photosystem I reaction center subunit XI (Prochlorococcus marinus (strain AS9601)).